The following is a 343-amino-acid chain: N-malonyltransferase FDB2 (343 aa).

The active-site Acyl-thioester intermediate is Cys-107. Residue His-155 is the Proton acceptor of the active site. Residue Asp-170 is part of the active site.

It belongs to the arylamine N-acetyltransferase family.

It participates in xenobiotic degradation. N-malonyltransferase; part of the Fusarium detoxification of benzoxazolinone cluster involved in the degradation of benzoxazolinones produced by the host plant. Maize, wheat, and rye produce the 2 benzoxazinone phytoanticipins 2,4-dihy-droxy-7-methoxy-1,4-benzoxazin-3-one (DIMBOA) and 2,4-dihydroxy-1,4-benzoxazin-3-one (DIBOA) that, due to their inherent instability once released, spontaneously degrade to the more stable corresponding benzoxazolinones, 6-methoxy-2-benzoxazolinone (MBOA) and 2-benzoxazolinone (BOA), respectively. The first step in the detoxification of benzoxazolinones involves the hydrolysis of the cyclic ester bond of benzoxazolinones by the gamma-lactamase FDB1 to aminophenols. FDB1 is able to convert BOA into 2-aminophenol (2-AP), as well as MBOA into 5-methoxy-2-aminophenol (2-AMP). The N-malonyltransferase FDB2 then metabolizes aminophenols via N-malonylation to non-toxic malonamic acids. FDB2 converts 2-AP into N-(2-hydroxyphenyl) malonamic acid (HPMA) and 2-AMP into N-(2-hydroxy-4-methoxyphenyl) malonamic acid (HMPMA). The cluster also contains 2 transcription factors (FDB3 and FPSE_08121), an aldo-keto reductase (FPSE_08125) that possibly associates with a ketone component of BOA and MBOA degradation, an esterase (FPSE_08126), an acyl-CoA transferase (FPSE_08120), a solute carrier protein (FPSE_08119) and a transmembrane transporter (FPSE_08127) proposed to shuttle metabolites of benzoxazolinone degradation. The sequence is that of N-malonyltransferase FDB2 from Fusarium pseudograminearum (strain CS3096) (Wheat and barley crown-rot fungus).